A 1134-amino-acid chain; its full sequence is Sterol regulatory element-binding protein 1 (1134 aa).

The transcriptional activation (acidic) stretch occupies residues 1–60 (MDELAFGEAALEQTLAEMCELDTAVLNDIEDMLQLINNQDSDFPGLFDAPYAGGETGDTG). The Cytoplasmic segment spans residues 1–477 (MDELAFGEAA…HSRGMLDRSR (477 aa)). The 9aaTAD motif lies at 27 to 35 (NDIEDMLQL). Residues 46 to 73 (LFDAPYAGGETGDTGPSSPGANSPESFS) form a disordered region. The segment covering 59–69 (TGPSSPGANSP) has biased composition (polar residues). Ser-96 and Ser-115 each carry phosphoserine. Disordered stretches follow at residues 130–149 (LQPA…SFPA) and 170–195 (SGTL…VLPT). Residues 170–179 (SGTLPGNTQQ) are compositionally biased toward polar residues. The tract at residues 227–487 (QQVPVVLQPH…LALCVLAFLC (261 aa)) is interaction with LMNA. The bHLH domain occupies 317–367 (EKRTAHNAIEKRYRSSINDKIVELKDLVVGTEAKLNKSAVLRKAIDYIRFL). Phosphoserine; by SIK1 occurs at positions 331 and 332. The segment at 367–388 (LQHSNQKLKQENLTLRSAHKSK) is leucine-zipper. Residue Ser-389 is modified to Phosphoserine; by AMPK. Phosphoserine; by SIK1 is present on Ser-395. A disordered region spans residues 415 to 468 (VETLTPPPSDAGSPSQSSPLSFGSRASSSGGSDSEPDSPAFEDSQVKAQRLPSH). Over residues 424 to 453 (DAGSPSQSSPLSFGSRASSSGGSDSEPDSP) the composition is skewed to low complexity. Residue Ser-448 is modified to Phosphoserine. A helical membrane pass occupies residues 478–498 (LALCVLAFLCLTCNPLASLFG). The Lumenal segment spans residues 499-536 (WGILTPSDATGTHRSSGRSMLEAESRDGSNWTQWLLPP). Residues 537-557 (LVWLANGLLVLACLALLFVYG) form a helical membrane-spanning segment. The Cytoplasmic portion of the chain corresponds to 558–1134 (EPVTRPHSGP…LGGGTTVTSS (577 aa)). The residue at position 1047 (Ser-1047) is a Phosphoserine.

The protein belongs to the SREBP family. Forms a tight complex with SCAP, the SCAP-SREBP complex, in the endoplasmic reticulum membrane and the Golgi apparatus. Interacts with PAQR3; the interaction anchors the SCAP-SREBP complex to the Golgi apparatus in low cholesterol conditions. In terms of assembly, efficient DNA binding of the soluble transcription factor fragment requires dimerization with another bHLH protein. Interacts with CEBPA, the interaction produces a transcriptional synergy. Interacts with LMNA. Processed in the Golgi apparatus, releasing the protein from the membrane. At low cholesterol the SCAP-SREBP complex is recruited into COPII vesicles for export from the endoplasmic reticulum. In the Golgi, complex SREBPs are cleaved sequentially by site-1 (MBTPS1, S1P) and site-2 (MBTPS2, S2P) proteases. The first cleavage by site-1 protease occurs within the luminal loop, the second cleavage by site-2 protease occurs within the first transmembrane domain, releasing the transcription factor from the Golgi membrane. Post-translationally, phosphorylated by AMPK, leading to suppress protein processing and nuclear translocation, and repress target gene expression. Phosphorylation at Ser-389 by SIK1 represses activity possibly by inhibiting DNA-binding. In terms of processing, SCAP-free SREBF1 is ubiquitinated by the BCR(ARMC5) complex, leading to its degradation. Ubiquitinated; the nuclear form has a rapid turnover and is rapidly ubiquitinated and degraded by the proteasome in the nucleus. Predominant isoform expressed in most tissues. Predominates in liver, adrenal gland, brain and adipose tissue. Also found in kidney, thymus, testis, muscle, jejunum, and ileum. In terms of tissue distribution, expressed only in select tissues, such as intestinal epithelial, heart, macrophage and bone marrow dendritic cells. Also found in kidney, thymus, testis, muscle, jejunum, and ileum.

The protein localises to the endoplasmic reticulum membrane. The protein resides in the golgi apparatus membrane. Its subcellular location is the cytoplasmic vesicle. It localises to the COPII-coated vesicle membrane. It is found in the nucleus. With respect to regulation, activation by cleavage is down-regulated upon activation of SIRT3-dependent PRKAA1/AMPK-alpha signaling cascade which leads to inhibition of ATP-consuming lipogenesis to restore cellular energy balance. Precursor of the transcription factor form (Processed sterol regulatory element-binding protein 1), which is embedded in the endoplasmic reticulum membrane. Low sterol concentrations promote processing of this form, releasing the transcription factor form that translocates into the nucleus and activates transcription of genes involved in cholesterol biosynthesis and lipid homeostasis. In terms of biological role, key transcription factor that regulates expression of genes involved in cholesterol biosynthesis and lipid homeostasis. Binds to the sterol regulatory element 1 (SRE-1) (5'-ATCACCCCAC-3'). Has dual sequence specificity binding to both an E-box motif (5'-ATCACGTGA-3') and to SRE-1 (5'-ATCACCCCAC-3'). Regulates the promoters of genes involved in cholesterol biosynthesis and the LDL receptor (LDLR) pathway of sterol regulation. Its function is as follows. Isoform expressed only in select tissues, which has higher transcriptional activity compared to SREBP-1C. Able to stimulate both lipogenic and cholesterogenic gene expression. Has a role in the nutritional regulation of fatty acids and triglycerides in lipogenic organs such as the liver. Required for innate immune response in macrophages by regulating lipid metabolism. Functionally, predominant isoform expressed in most tissues, which has weaker transcriptional activity compared to isoform SREBP-1A. Primarily controls expression of lipogenic gene. Strongly activates global lipid synthesis in rapidly growing cells. The sequence is that of Sterol regulatory element-binding protein 1 from Mus musculus (Mouse).